The chain runs to 335 residues: Probable cytosolic iron-sulfur protein assembly protein Ciao1 (335 aa).

WD repeat units follow at residues 12–51 (GHKGRIWGVAWHPKGNVFASCGEDKAIRVWSLSGNTWSTK), 57–96 (GHKRTIREIRWSPCGQYLASASFDATTAIWSKSSGEFECN), 101–140 (GHENEVKSVSWSRSGGLLATCSRDKSVWIWEVAGDDEFEC), 146–185 (AHTQDVKRVVWHPTKDILASASYDNTIKMFAESQLDSDWD), 192–231 (SHTSTVWSIDFDAEGDRLVSCSDDKTLKIWRAYHPGNDAG), 250–289 (QHSRAIYDVSWCKLTGLIATGCGDDGIRIFKETSDSKRDE), and 301–335 (AHEQDVNAVEWNPAVAGQLISCSDDGTIKIWKVDD).

This sequence belongs to the WD repeat CIA1 family.

Functionally, essential component of the cytosolic iron-sulfur (Fe/S) protein assembly machinery. Required for the maturation of extramitochondrial Fe/S proteins. The protein is Probable cytosolic iron-sulfur protein assembly protein Ciao1 of Drosophila pseudoobscura pseudoobscura (Fruit fly).